Reading from the N-terminus, the 258-residue chain is Phosphoribosylaminoimidazole-succinocarboxamide synthase (258 aa).

The protein belongs to the SAICAR synthetase family.

The catalysed reaction is 5-amino-1-(5-phospho-D-ribosyl)imidazole-4-carboxylate + L-aspartate + ATP = (2S)-2-[5-amino-1-(5-phospho-beta-D-ribosyl)imidazole-4-carboxamido]succinate + ADP + phosphate + 2 H(+). Its pathway is purine metabolism; IMP biosynthesis via de novo pathway; 5-amino-1-(5-phospho-D-ribosyl)imidazole-4-carboxamide from 5-amino-1-(5-phospho-D-ribosyl)imidazole-4-carboxylate: step 1/2. The protein is Phosphoribosylaminoimidazole-succinocarboxamide synthase of Sphingopyxis alaskensis (strain DSM 13593 / LMG 18877 / RB2256) (Sphingomonas alaskensis).